A 490-amino-acid chain; its full sequence is MIENENTSLLSTSSSSTSSSPNNANSPSSLNIGISNSENGTPRKDNTSGNNSPSAQITKYNGIDISNNSSRNSSRPNSRSGYRGDSSSNNNNNNNNNNNNNNNNNNINKHNSIVYNKSNNKLNSIGGSNNDLQGGGGGNGNGNGNGSSKYKIGINNKDVEEKIEIKKQKKMNRTNNQKFWRIVGSILQIIGLSSIVFTIFIGLYIDGYIDWSYWILFIPVYVILAASYLATGSRVLSNLVSWIIRLVWRLSVFGLTVFVVFTIIHFKYNTFGFSVMMIPLLFTFGSVFVMGIFSLLFGIIFVDGKSTPQRKTKYIVNGLPLLFTGAILTPAAIMIALKLDGLYDAKLAVCFVSLFIGDIIASCFSFFLLIFSLGSKDTATFSIGQLLSIIFITICSIVFKVLLILATDQQHNINSLFLLIPLLVAEAFMVFCGINLFLRPPRVIVDNSEELAKSNMINNQDSSESESDDETEVSFKDREDEESEKLISNL.

Residues 1–31 (MIENENTSLLSTSSSSTSSSPNNANSPSSLN) are compositionally biased toward low complexity. Disordered stretches follow at residues 1–151 (MIEN…SKYK) and 455–490 (NMINNQDSSESESDDETEVSFKDREDEESEKLISNL). The span at 47 to 59 (TSGNNSPSAQITK) shows a compositional bias: polar residues. Composition is skewed to low complexity over residues 66-80 (SNNSSRNSSRPNSRS) and 89-108 (NNNNNNNNNNNNNNNNNNIN). Residues 109-125 (KHNSIVYNKSNNKLNSI) are compositionally biased toward polar residues. A compositionally biased stretch (gly residues) spans 133 to 145 (QGGGGGNGNGNGN). Positions 463–472 (SESESDDETE) are enriched in acidic residues.

The protein belongs to the TMEM185 family.

The chain is Transmembrane protein 185-like from Dictyostelium discoideum (Social amoeba).